The sequence spans 623 residues: Activator of C kinase protein 1 (623 aa).

Positions 141-230 (KESLGSPAVQ…GSSGGEDKLS (90 aa)) are disordered. Residues 152-161 (ASISSGNRIS) are compositionally biased toward polar residues. Over residues 176-193 (SESRILQEKVYRTEEKAP) the composition is skewed to basic and acidic residues. Glycyl lysine isopeptide (Lys-Gly) (interchain with G-Cter in ubiquitin) cross-links involve residues Lys184 and Lys191. Positions 206-215 (KINQPPTGSA) are enriched in polar residues. 4 Sel1-like repeats span residues 318–361 (PPAM…KLNN), 408–444 (SACM…QKGD), 495–531 (PLAQ…AAQP), and 576–611 (ARTE…RMGF).

The chain is Activator of C kinase protein 1 (ACK1) from Saccharomyces cerevisiae (strain ATCC 204508 / S288c) (Baker's yeast).